The following is a 65-amino-acid chain: Large ribosomal subunit protein bL32 (65 aa).

Residues M1–H19 show a composition bias toward basic residues. The disordered stretch occupies residues M1 to E32.

This sequence belongs to the bacterial ribosomal protein bL32 family.

This is Large ribosomal subunit protein bL32 from Vesicomyosocius okutanii subsp. Calyptogena okutanii (strain HA).